Reading from the N-terminus, the 550-residue chain is Chaperonin GroEL (550 aa).

ATP-binding positions include 30-33, K51, 87-91, G415, and D496; these read TLGP and DGTTT. The tract at residues 526–550 is disordered; that stretch reads PEDEKMPPMPPGGGMGGMGGMGGMY. Gly residues predominate over residues 537–550; sequence GGGMGGMGGMGGMY.

Belongs to the chaperonin (HSP60) family. In terms of assembly, forms a cylinder of 14 subunits composed of two heptameric rings stacked back-to-back. Interacts with the co-chaperonin GroES.

The protein resides in the cytoplasm. The catalysed reaction is ATP + H2O + a folded polypeptide = ADP + phosphate + an unfolded polypeptide.. Functionally, together with its co-chaperonin GroES, plays an essential role in assisting protein folding. The GroEL-GroES system forms a nano-cage that allows encapsulation of the non-native substrate proteins and provides a physical environment optimized to promote and accelerate protein folding. This Chloroherpeton thalassium (strain ATCC 35110 / GB-78) protein is Chaperonin GroEL.